The chain runs to 118 residues: Large ribosomal subunit protein uL22 (118 aa).

The protein belongs to the universal ribosomal protein uL22 family. Part of the 50S ribosomal subunit.

Functionally, this protein binds specifically to 23S rRNA; its binding is stimulated by other ribosomal proteins, e.g. L4, L17, and L20. It is important during the early stages of 50S assembly. It makes multiple contacts with different domains of the 23S rRNA in the assembled 50S subunit and ribosome. The globular domain of the protein is located near the polypeptide exit tunnel on the outside of the subunit, while an extended beta-hairpin is found that lines the wall of the exit tunnel in the center of the 70S ribosome. The sequence is that of Large ribosomal subunit protein uL22 from Listeria innocua serovar 6a (strain ATCC BAA-680 / CLIP 11262).